A 262-amino-acid polypeptide reads, in one-letter code: Probable esterase azaC (262 aa).

Catalysis depends on charge relay system residues serine 119, aspartate 188, and histidine 216.

It belongs to the LovG family.

It participates in secondary metabolite biosynthesis. Its function is as follows. Probable esterase; part of the gene cluster that mediates the biosynthesis of azaphilones, a class of fungal metabolites characterized by a highly oxygenated pyrano-quinone bicyclic core and exhibiting a broad range of bioactivities. In the first step, the non-reducing polyketide synthase azaA forms the hexaketide precursor from successive condensations of five malonyl-CoA units, presumably with a simple acetyl-CoA starter unit. The reactive polyketide chain then undergoes a PT-mediated C2-C7 cyclization to afford the aromatic ring and is eventually released as an aldehyde through the R-domain. The putative ketoreductase azaE is proposed to catalyze the reduction of the terminal ketone resulting in the early culture product FK17-P2a. The monooxygenase azaH was demonstrated to be the only enzyme required to convert FK17-P2a to azanigerone E. AzaH first hydroxylates the benzaldehyde intermediate FK17-P2a at C4, which triggers the formation of the pyran-ring to afford azanigerone E. In parallel, the 2,4-dimethylhexanoyl chain is synthesized by the HR-PKS azaB and is proposed to be transferred to the C4-hydroxyl of azanigerone E by the acyltransferase azaD directly from the ACP domain of azaB. Alternatively, the 2,4-dimethyl-hexanoyl chain may be offloaded from the HR-PKS as a carboxylic acid and converted to an acyl-CoA by azaF. The resulting acyl-CoA molecule could then be taken up as a substrate by AzaD to form azanigerone B. To yield the carboxylic acid substituent in azanigerone A, the hydroxypropyl side chain of azanigerone B would need to undergo a C-C oxidative cleavage catalyzed by cytochrome P450 AzaI. AzaI is proposed to act on a vicinal diol that leads to a C-C bond scission either through an alkoxyradical intermediate or a peroxy complex. In the biosynthesis of azanigerone A, azanigerone B first undergoes hydroxylation at C10, possibly catalyzed by one of the two FAD-dependent monooxygenases encoded in the cluster, azaG or azaL, resulting in the vicinal diol azanigerone C. Oxidative cleavage of azanigerone C by azaI would yield the corresponding aldehyde derivative of azanigerone A. Finally, the dehydrogenase azaJ is proposed to convert the aldehyde functional group into the carboxylic acid, completing the conversion from azanigerone B to azanigerone A. Alternatively, the oxidation of aldehyde to carboxylic acid may be catalyzed by the same P450 enzyme azaI via consecutive oxidation or by endogenous alcohol dehydrogenase. The protein is Probable esterase azaC of Aspergillus niger (strain ATCC 1015 / CBS 113.46 / FGSC A1144 / LSHB Ac4 / NCTC 3858a / NRRL 328 / USDA 3528.7).